A 712-amino-acid chain; its full sequence is Polyribonucleotide nucleotidyltransferase (712 aa).

Mg(2+)-binding residues include Asp487 and Asp493. Residues 554–613 form the KH domain; the sequence is PKIITMTINPDKIRDVIGPSGKQINKIIEETGVKIDIEQDGTVFISSINQEMNDKAKKII. The S1 motif domain occupies 623–691; sequence GEIYEGKVKR…KQGRVNLSRK (69 aa).

It belongs to the polyribonucleotide nucleotidyltransferase family. Requires Mg(2+) as cofactor.

Its subcellular location is the cytoplasm. The enzyme catalyses RNA(n+1) + phosphate = RNA(n) + a ribonucleoside 5'-diphosphate. In terms of biological role, involved in mRNA degradation. Catalyzes the phosphorolysis of single-stranded polyribonucleotides processively in the 3'- to 5'-direction. This chain is Polyribonucleotide nucleotidyltransferase, found in Bacillus cereus (strain 03BB102).